Here is a 108-residue protein sequence, read N- to C-terminus: Nucleoid-associated protein Mmwyl1_2533 (108 aa).

A disordered region spans residues 1-22 (MFKGGMGNMMRQAQQMQENMQK). Residues 11-22 (RQAQQMQENMQK) are compositionally biased toward polar residues.

It belongs to the YbaB/EbfC family. As to quaternary structure, homodimer.

It localises to the cytoplasm. The protein resides in the nucleoid. Binds to DNA and alters its conformation. May be involved in regulation of gene expression, nucleoid organization and DNA protection. The protein is Nucleoid-associated protein Mmwyl1_2533 of Marinomonas sp. (strain MWYL1).